The following is a 380-amino-acid chain: MKLHEYQAKGVFADAGIPVPESTLASTVDEAVEAADDIGYPVAIKAQVQVGGRGKAGGIKLVENADEAREAADEILGMDLKGLHVDRVLVEAAVDFTDELYVGVTMDRAAGKPVAMVSTRGGVNIEEVAEEDPDAIVREHIDPAFGMHPFQARKAAFEAGVDRAVANDVASILTQLYELWADKDATEIEVNPLMVTDDDEVIAADAVMNIDEDALFRHPDLEEMEEEAAGDELEAKANEYGFDYVRLSGNTGIIGNGAGLVMTTLDLVDHYGGEPANFLDIGGGAKAERVANALDMVFSDDNVDSVVFNIFGGITRGDEVAKGINEALEQFDEIPKPVVVRLAGTNAEEGMEILNTDLVTVEKTLEDAVQRAVKYAEEEQ.

The ATP-grasp domain occupies Lys-9–Lys-236. Residues Lys-45, Gly-52–Gly-54, Glu-91, Val-94, and Glu-99 each bind ATP. Mg(2+)-binding residues include Asn-191 and Asp-205. Substrate-binding positions include Asn-256 and Gly-313–Thr-315.

Belongs to the succinate/malate CoA ligase beta subunit family. As to quaternary structure, heterotetramer of two alpha and two beta subunits. Mg(2+) is required as a cofactor.

The catalysed reaction is succinate + ATP + CoA = succinyl-CoA + ADP + phosphate. The enzyme catalyses GTP + succinate + CoA = succinyl-CoA + GDP + phosphate. The protein operates within carbohydrate metabolism; tricarboxylic acid cycle; succinate from succinyl-CoA (ligase route): step 1/1. Functionally, succinyl-CoA synthetase functions in the citric acid cycle (TCA), coupling the hydrolysis of succinyl-CoA to the synthesis of either ATP or GTP and thus represents the only step of substrate-level phosphorylation in the TCA. The beta subunit provides nucleotide specificity of the enzyme and binds the substrate succinate, while the binding sites for coenzyme A and phosphate are found in the alpha subunit. The protein is Succinate--CoA ligase [ADP-forming] subunit beta of Natronomonas pharaonis (strain ATCC 35678 / DSM 2160 / CIP 103997 / JCM 8858 / NBRC 14720 / NCIMB 2260 / Gabara) (Halobacterium pharaonis).